Consider the following 295-residue polypeptide: Nitrogenase iron protein (295 aa).

ATP is bound at residue 10–17 (GKGGIGKS). Residue Cys-98 coordinates [4Fe-4S] cluster. The residue at position 101 (Arg-101) is an ADP-ribosylarginine; by dinitrogenase reductase ADP-ribosyltransferase. Cys-133 serves as a coordination point for [4Fe-4S] cluster.

Belongs to the NifH/BchL/ChlL family. Homodimer. [4Fe-4S] cluster is required as a cofactor. Post-translationally, the reversible ADP-ribosylation of Arg-101 inactivates the nitrogenase reductase and regulates nitrogenase activity.

It carries out the reaction N2 + 8 reduced [2Fe-2S]-[ferredoxin] + 16 ATP + 16 H2O = H2 + 8 oxidized [2Fe-2S]-[ferredoxin] + 2 NH4(+) + 16 ADP + 16 phosphate + 6 H(+). The key enzymatic reactions in nitrogen fixation are catalyzed by the nitrogenase complex, which has 2 components: the iron protein and the molybdenum-iron protein. This Tolumonas auensis (strain DSM 9187 / NBRC 110442 / TA 4) protein is Nitrogenase iron protein.